The primary structure comprises 546 residues: DDB1- and CUL4-associated factor 11 (546 aa).

Residues 1–19 (MGSRNSSSAGSGSGDPSEG) show a composition bias toward low complexity. The interval 1-40 (MGSRNSSSAGSGSGDPSEGLTRRGAGLRRSEEEEEEDEDV) is disordered. Ser-75 is modified (phosphoserine). WD repeat units follow at residues 170–210 (SYSQ…RKFK), 216–258 (DVGW…TALD), 263–302 (ERRFAVFSIAVSSDGREVLGGANDGCLYVFDREQNRRTLQ), 305–345 (SHED…EDDP), 353–392 (GHQDGITFIDSKGDARYLISNSKDQTIKLWDIRRFSSREG), 435–480 (GVLH…KKLT), and 481–520 (NHKACVRDVSWHPFEEKIVSSSWDGNLRLWQYRQAEYFQD). The segment at 523–546 (PESEECASAPAPVPRSSTPFSSPQ) is disordered. Residues 537–546 (RSSTPFSSPQ) are compositionally biased toward polar residues.

In terms of assembly, interacts with DDB1 and CUL4A.

The protein operates within protein modification; protein ubiquitination. May function as a substrate receptor for CUL4-DDB1 E3 ubiquitin-protein ligase complex. This Pongo abelii (Sumatran orangutan) protein is DDB1- and CUL4-associated factor 11 (DCAF11).